The sequence spans 917 residues: Methionine--tRNA ligase, cytoplasmic (917 aa).

Positions 44-54 match the 'HIGH' region motif; the sequence is PYVNNVPHLGN. The short motif at 367–371 is the 'KMSKS' region element; sequence KFSKS. Lys370 lines the ATP pocket. Disordered regions lie at residues 591-623 and 702-749; these read GSQDAQSSAPKTAEKPKQQKKQAPTKDKKGDKK and SCTP…AAAA. Residues 614-623 are compositionally biased toward basic and acidic residues; that stretch reads PTKDKKGDKK. Over residues 702–713 the composition is skewed to low complexity; sequence SCTPTPTSTPAS. Residues 732–741 show a composition bias toward basic and acidic residues; it reads EPKKAKEQKK. A tRNA-binding domain is found at 756–857; sequence DVGRLDMRVG…ADSKPGTPVV (102 aa).

The protein belongs to the class-I aminoacyl-tRNA synthetase family.

The protein resides in the cytoplasm. The catalysed reaction is tRNA(Met) + L-methionine + ATP = L-methionyl-tRNA(Met) + AMP + diphosphate. The protein is Methionine--tRNA ligase, cytoplasmic of Caenorhabditis elegans.